The chain runs to 275 residues: Formamidopyrimidine-DNA glycosylase (275 aa).

The active-site Schiff-base intermediate with DNA is Pro2. The Proton donor role is filled by Glu3. Residue Lys58 is the Proton donor; for beta-elimination activity of the active site. DNA contacts are provided by His93, Arg111, and Arg156. The segment at 241–275 (FAYDRAGLPCRVCGTPIRQIVQGQRSTYFCPTCQR) adopts an FPG-type zinc-finger fold. Arg265 functions as the Proton donor; for delta-elimination activity in the catalytic mechanism.

The protein belongs to the FPG family. As to quaternary structure, monomer. Requires Zn(2+) as cofactor.

The catalysed reaction is Hydrolysis of DNA containing ring-opened 7-methylguanine residues, releasing 2,6-diamino-4-hydroxy-5-(N-methyl)formamidopyrimidine.. The enzyme catalyses 2'-deoxyribonucleotide-(2'-deoxyribose 5'-phosphate)-2'-deoxyribonucleotide-DNA = a 3'-end 2'-deoxyribonucleotide-(2,3-dehydro-2,3-deoxyribose 5'-phosphate)-DNA + a 5'-end 5'-phospho-2'-deoxyribonucleoside-DNA + H(+). Its function is as follows. Involved in base excision repair of DNA damaged by oxidation or by mutagenic agents. Acts as a DNA glycosylase that recognizes and removes damaged bases. Has a preference for oxidized purines, such as 7,8-dihydro-8-oxoguanine (8-oxoG). Has AP (apurinic/apyrimidinic) lyase activity and introduces nicks in the DNA strand. Cleaves the DNA backbone by beta-delta elimination to generate a single-strand break at the site of the removed base with both 3'- and 5'-phosphates. This Burkholderia vietnamiensis (strain G4 / LMG 22486) (Burkholderia cepacia (strain R1808)) protein is Formamidopyrimidine-DNA glycosylase.